The sequence spans 706 residues: Methionine--tRNA ligase (706 aa).

The 'HIGH' region signature appears at 13–23; the sequence is PYANGNFHIGH. The Zn(2+) site is built by Cys144, Cys147, Cys157, and Cys160. The short motif at 341–345 is the 'KMSKS' region element; it reads KMSKS. Lys344 provides a ligand contact to ATP. A tRNA-binding domain is found at 600–706; the sequence is DFAKIDLRIA…PGATPGMRVR (107 aa).

Belongs to the class-I aminoacyl-tRNA synthetase family. MetG type 1 subfamily. In terms of assembly, homodimer. It depends on Zn(2+) as a cofactor.

The protein localises to the cytoplasm. The enzyme catalyses tRNA(Met) + L-methionine + ATP = L-methionyl-tRNA(Met) + AMP + diphosphate. In terms of biological role, is required not only for elongation of protein synthesis but also for the initiation of all mRNA translation through initiator tRNA(fMet) aminoacylation. In Paracidovorax citrulli (strain AAC00-1) (Acidovorax citrulli), this protein is Methionine--tRNA ligase.